The primary structure comprises 260 residues: 3'-5' ssDNA/RNA exonuclease TatD (260 aa).

A divalent metal cation is bound by residues Glu92, His128, and His153.

This sequence belongs to the metallo-dependent hydrolases superfamily. TatD-type hydrolase family. TatD subfamily. As to quaternary structure, monomer. Mg(2+) serves as cofactor.

The protein resides in the cytoplasm. Functionally, 3'-5' exonuclease that prefers single-stranded DNA and RNA. May play a role in the H(2)O(2)-induced DNA damage repair. The sequence is that of 3'-5' ssDNA/RNA exonuclease TatD from Yersinia pseudotuberculosis serotype O:3 (strain YPIII).